A 433-amino-acid polypeptide reads, in one-letter code: Homeobox protein Hox-D3 (433 aa).

Disordered stretches follow at residues 44–198 (STPH…SKRV), 258–280 (GILHSPAGQSPERSPPLGGAAGH), and 401–433 (HHGPCDPHPTYTDLSAHHSSQGRLPEAPKLTHL). Polar residues predominate over residues 58–74 (SLDSDYPSSACSIQSSA). Residues 97-106 (NSQGGGGGNQ) are compositionally biased toward gly residues. The span at 116-132 (PPQPPPPPPPTLPPSSP) shows a compositional bias: pro residues. A compositionally biased stretch (low complexity) spans 146-159 (GGLSASSSSSTISK). The Antp-type hexapeptide signature appears at 161–166 (IFPWMK). The span at 171–183 (NSKQKNSCATSGE) shows a compositional bias: polar residues. Positions 195 to 254 (SKRVRTAYTSAQLVELEKEFHFNRYLCRPRRVEMANLLNLTERQIKIWFQNRRMKYKKDQ) form a DNA-binding region, homeobox.

Belongs to the Antp homeobox family. Detected in adult kidney, but not in other adult tissues tested.

The protein resides in the nucleus. Sequence-specific transcription factor which is part of a developmental regulatory system that provides cells with specific positional identities on the anterior-posterior axis. In Mus musculus (Mouse), this protein is Homeobox protein Hox-D3 (Hoxd3).